A 372-amino-acid chain; its full sequence is Peptide chain release factor 2 (372 aa).

An N5-methylglutamine modification is found at Gln253.

This sequence belongs to the prokaryotic/mitochondrial release factor family. Post-translationally, methylated by PrmC. Methylation increases the termination efficiency of RF2.

The protein localises to the cytoplasm. Functionally, peptide chain release factor 2 directs the termination of translation in response to the peptide chain termination codons UGA and UAA. In Nocardia farcinica (strain IFM 10152), this protein is Peptide chain release factor 2.